The sequence spans 1755 residues: Gag-Pro-Pol polyprotein (1755 aa).

The N-myristoyl glycine; by host moiety is linked to residue G2. 2 stretches are compositionally biased toward basic and acidic residues: residues 151-169 (YDEP…EKDH) and 178-191 (QRKE…KEKD). The disordered stretch occupies residues 151–191 (YDEPYEEKEKADKNEEKDHVRKIKKVVQRKENSEGKRKEKD). The short motif at 305–308 (PSAP) is the PTAP/PSAP motif element. 2 CCHC-type zinc fingers span residues 525–542 (PVCF…DCKD) and 552–569 (GLCP…ECKS). The tract at residues 572–631 (DKDGNPLPPLETNAENSKNLVKGQSPSPAQKGDGVKGSGLNPEAPPFTIHDLPRGTPGSA) is disordered. The segment covering 584–599 (NAENSKNLVKGQSPSP) has biased composition (polar residues). The 76-residue stretch at 766–841 (FLGLLDTGAD…LPFTLWGRDI (76 aa)) folds into the Peptidase A2 domain. D771 acts as the Protease; shared with dimeric partner in catalysis. The 189-residue stretch at 905–1093 (LQLGHLEESN…DNLKYLGTHI (189 aa)) folds into the Reverse transcriptase domain. Mg(2+)-binding residues include D970, D1045, D1046, D1316, E1346, D1366, and D1429. One can recognise an RNase H type-1 domain in the interval 1307–1437 (LEKGIVIFTD…ADSLTRILTA (131 aa)). The Integrase-type zinc-finger motif lies at 1436–1477 (TALESAQESHALHHQNAAALRFQFHITREQAREIVKLCPNCP). Positions 1445, 1449, 1473, and 1476 each coordinate Zn(2+). The Integrase catalytic domain maps to 1490 to 1647 (RGLKPRVLWQ…TAAERHWGPI (158 aa)). Mg(2+) contacts are provided by D1501, D1558, and E1594. Residues 1653-1702 (PMVMWKDLLTGSWKGPDVLITAGRGYACVFPQDAETPIWVPDRFIRPFTE) constitute a DNA-binding region (integrase-type). The disordered stretch occupies residues 1699-1755 (PFTERKEATPTPGTAEKTPPRDEKDQQESPKNESSPHQREDGLATSAGVDLRSGGGP). The span at 1716–1740 (TPPRDEKDQQESPKNESSPHQREDG) shows a compositional bias: basic and acidic residues.

This sequence belongs to the retroviral Pol polyprotein family. Homodimer; when myristoylated. As to quaternary structure, homodimer. In terms of assembly, homooctamer. Homotrimer. The cofactor is Mg(2+). In terms of processing, specific enzymatic cleavages in vivo yield mature proteins. Released by autocatalytic processing. Post-translationally, myristoylated. Myristoylation of the matrix (MA) domain mediates the transport and binding of Gag polyproteins to the host plasma membrane and is required for the assembly of viral particles.

It is found in the virion. The catalysed reaction is DNA(n) + a 2'-deoxyribonucleoside 5'-triphosphate = DNA(n+1) + diphosphate. The enzyme catalyses Endonucleolytic cleavage to 5'-phosphomonoester.. It catalyses the reaction dUTP + H2O = dUMP + diphosphate + H(+). Inhibited by pepstatin A. In terms of biological role, matrix protein. Functionally, nucleocapsid protein p14: Binds strongly to viral nucleic acids and promote their aggregation. Also destabilizes the nucleic acids duplexes via highly structured zinc-binding motifs. Capsid protein. Its function is as follows. NC-dUTPase has dUTPase activity, thereby preventing incorporation of uracil into DNA. In terms of biological role, the aspartyl protease mediates proteolytic cleavages of Gag and Gag-Pol polyproteins during or shortly after the release of the virion from the plasma membrane. Cleavages take place as an ordered, step-wise cascade to yield mature proteins. This process is called maturation. Displays maximal activity during the budding process just prior to particle release from the cell. Functionally, RT is a multifunctional enzyme that converts the viral dimeric RNA genome into dsDNA in the cytoplasm, shortly after virus entry into the cell. This enzyme displays a DNA polymerase activity that can copy either DNA or RNA templates, and a ribonuclease H (RNase H) activity that cleaves the RNA strand of RNA-DNA heteroduplexes in a partially processive 3' to 5' endonucleasic mode. Conversion of viral genomic RNA into dsDNA requires many steps. A tRNA binds to the primer-binding site (PBS) situated at the 5' end of the viral RNA. RT uses the 3' end of the tRNA primer to perfom a short round of RNA-dependent minus-strand DNA synthesis. The reading proceeds through the U5 region and ends after the repeated (R) region which is present at both ends of viral RNA. The portion of the RNA-DNA heteroduplex is digested by the RNase H, resulting in a ssDNA product attached to the tRNA primer. This ssDNA/tRNA hybridizes with the identical R region situated at the 3' end of viral RNA. This template exchange, known as minus-strand DNA strong stop transfer, can be either intra- or intermolecular. RT uses the 3' end of this newly synthesized short ssDNA to perfom the RNA-dependent minus-strand DNA synthesis of the whole template. RNase H digests the RNA template except for a polypurine tract (PPT) situated at the 5' end of the genome. It is not clear if both polymerase and RNase H activities are simultaneous. RNase H probably can proceed both in a polymerase-dependent (RNA cut into small fragments by the same RT performing DNA synthesis) and a polymerase-independent mode (cleavage of remaining RNA fragments by free RTs). Secondly, RT performs DNA-directed plus-strand DNA synthesis using the PPT that has not been removed by RNase H as primers. PPT and tRNA primers are then removed by RNase H. The 3' and 5' ssDNA PBS regions hybridize to form a circular dsDNA intermediate. Strand displacement synthesis by RT to the PBS and PPT ends produces a blunt ended, linear dsDNA copy of the viral genome that includes long terminal repeats (LTRs) at both ends. Catalyzes viral DNA integration into the host chromosome, by performing a series of DNA cutting and joining reactions. The polypeptide is Gag-Pro-Pol polyprotein (gag-pro-pol) (Mus musculus (Mouse)).